A 1572-amino-acid polypeptide reads, in one-letter code: Dynein axonemal assembly factor 8 (1572 aa).

Disordered stretches follow at residues 1 to 21 (MASE…NWSG), 262 to 304 (SEEV…HPQS), 324 to 428 (SLEQ…EILQ), and 849 to 871 (FQNP…SDSE). Polar residues predominate over residues 324–335 (SLEQNPENPSQR). The segment covering 336 to 351 (NEQKEKHHLNKTDHTG) has biased composition (basic and acidic residues). A compositionally biased stretch (polar residues) spans 361–374 (NIQNDSLSDANMSN). Positions 409 to 426 (VGREEKDGREEQEKEKEI) are enriched in basic and acidic residues. Residues 849–865 (FQNPYSRSTQPRSANLR) are compositionally biased toward polar residues. An NDK region spans residues 1249–1382 (TVLLLKPRIW…IRDIKTFFPE (134 aa)).

In terms of assembly, interacts with DNAI2. In terms of tissue distribution, expression is enriched in multiciliated cells in the epidermis and the nephrostomes of the pronephros.

Its subcellular location is the dynein axonemal particle. It is found in the cytoplasm. Its function is as follows. In cyliated cells, dynein axonemal particle-specific protein required for deployment of ODA to the axoneme. Interacts with outer dynein arm (ODA) subunits. In Xenopus laevis (African clawed frog), this protein is Dynein axonemal assembly factor 8 (dnaaf8).